The sequence spans 135 residues: uncharacterized protein (135 aa).

Helical transmembrane passes span 4–24 (IIICIKLGVVFLGTLFTWIFG), 26–46 (WDMPIVTLLVFIFLDYLTGVI), 68–88 (LILVVLLVAVMLDRLLDNGAW), and 93–113 (LIAYFYIMNEGISILENCAAL).

Belongs to the bacteriophage holin family. Cp-1 holin subfamily.

The protein localises to the cell membrane. This is an uncharacterized protein from Clostridium perfringens (strain 13 / Type A).